A 301-amino-acid chain; its full sequence is GTPase Era (301 aa).

One can recognise an Era-type G domain in the interval 7–175 (YCGFIAIVGR…AAIVRKHLPE (169 aa)). A G1 region spans residues 15 to 22 (GRPNVGKS). 15 to 22 (GRPNVGKS) provides a ligand contact to GTP. A G2 region spans residues 41 to 45 (QTTRH). The interval 62–65 (DTPG) is G3. Residues 62-66 (DTPGL) and 124-127 (NKVD) contribute to the GTP site. Positions 124–127 (NKVD) are G4. The tract at residues 154–156 (ISA) is G5. Residues 206–283 (LGAELPYSVT…HLELWVKVKS (78 aa)) enclose the KH type-2 domain.

The protein belongs to the TRAFAC class TrmE-Era-EngA-EngB-Septin-like GTPase superfamily. Era GTPase family. In terms of assembly, monomer.

The protein resides in the cytoplasm. It is found in the cell inner membrane. Functionally, an essential GTPase that binds both GDP and GTP, with rapid nucleotide exchange. Plays a role in 16S rRNA processing and 30S ribosomal subunit biogenesis and possibly also in cell cycle regulation and energy metabolism. The chain is GTPase Era from Shigella flexneri.